Here is a 513-residue protein sequence, read N- to C-terminus: Ferulic acid decarboxylase 1 (513 aa).

Asn-174, His-197, and Glu-240 together coordinate Mn(2+). Prenylated FMN is bound by residues 174-179 (NWSIAR), 196-197 (QH), and Glu-240. Catalysis depends on Glu-289, which acts as the Proton donor. Lys-405 is a binding site for prenylated FMN.

The protein belongs to the UbiD family. UbiD-like/FDC subfamily. Homodimer. May form higher order oligomers. Requires Mn(2+) as cofactor. Prenylated FMN is required as a cofactor.

Its subcellular location is the cytoplasm. The catalysed reaction is (E)-4-coumarate + H(+) = 4-vinylphenol + CO2. It catalyses the reaction (E)-cinnamate + H(+) = styrene + CO2. The enzyme catalyses (E)-ferulate + H(+) = 2-methoxy-4-vinylphenol + CO2. Catalyzes the reversible decarboxylation of aromatic carboxylic acids like ferulic acid, p-coumaric acid or cinnamic acid, producing the corresponding vinyl derivatives 4-vinylphenol, 4-vinylguaiacol, and styrene, respectively, which play the role of aroma metabolites. The chain is Ferulic acid decarboxylase 1 from Candida dubliniensis (strain CD36 / ATCC MYA-646 / CBS 7987 / NCPF 3949 / NRRL Y-17841) (Yeast).